A 440-amino-acid chain; its full sequence is Gap junction alpha-8 protein (440 aa).

The stretch at 2–12 (GDWSFLGNILE) is an intramembrane region. The Cytoplasmic segment spans residues 13 to 21 (EVNEHSTVI). A helical transmembrane segment spans residues 22 to 42 (GRVWLTVLFIFRILILGTAAE). At 43–71 (FVWGDEQSDFVCNTQQPGCENVCYDEAFP) the chain is on the extracellular side. Disulfide bonds link C54-C201, C61-C195, and C65-C190. The helical transmembrane segment at 72 to 92 (ISHIRLWVLQIIFVSTPSLVY) threads the bilayer. Residues 93 to 161 (VGHAVHHVRM…GTLLRTYVCH (69 aa)) are Cytoplasmic-facing. Residues 108–144 (EREAEELSQQSPGNGGERAPLAADQGSVKKSSSSSKG) are disordered. A helical transmembrane segment spans residues 162–182 (IIFKTLFEVGFIVGHYFLYGF). The Extracellular segment spans residues 183–210 (RILPLYRCSRWPCPNVVDCFVSRPTEKT). A helical membrane pass occupies residues 211–231 (IFILFMLSVASVSLFLNILEM). The Cytoplasmic portion of the chain corresponds to 232 to 440 (SHLGLKKIRS…SRARSDDLTV (209 aa)). The disordered stretch occupies residues 334–440 (GAQEGVEEEQ…SRARSDDLTV (107 aa)). Composition is skewed to basic and acidic residues over residues 353-365 (VGDK…RVST) and 375-405 (EEEK…ELTP). Low complexity predominate over residues 423–432 (LSRLSKASSR).

It belongs to the connexin family. Alpha-type (group II) subfamily. As to quaternary structure, a hemichannel or connexon is composed of a hexamer of connexins. A functional gap junction is formed by the apposition of two hemichannels. Forms heteromeric channels with GJA3. Detected in eye lens (at protein level). Eye lens.

Its subcellular location is the cell membrane. It localises to the cell junction. It is found in the gap junction. In terms of biological role, structural component of eye lens gap junctions. Gap junctions are dodecameric channels that connect the cytoplasm of adjoining cells. They are formed by the docking of two hexameric hemichannels, one from each cell membrane. Small molecules and ions diffuse from one cell to a neighboring cell via the central pore. The protein is Gap junction alpha-8 protein (GJA8) of Ovis aries (Sheep).